The primary structure comprises 92 residues: Small ribosomal subunit protein uS19 (92 aa).

The protein belongs to the universal ribosomal protein uS19 family.

Functionally, protein S19 forms a complex with S13 that binds strongly to the 16S ribosomal RNA. The protein is Small ribosomal subunit protein uS19 of Baumannia cicadellinicola subsp. Homalodisca coagulata.